The sequence spans 406 residues: Prenyltransferase phqJ (406 aa).

The segment covering 1 to 19 has biased composition (polar residues); the sequence is MTVSTESNFPHGASTQKPQ. A disordered region spans residues 1–23; sequence MTVSTESNFPHGASTQKPQSAEP. Position 99 (glutamate 99) interacts with brevianamide F. Arginine 113, lysine 200, and tyrosine 202 together coordinate dimethylallyl diphosphate. Tyrosine 204 contacts brevianamide F. Dimethylallyl diphosphate is bound by residues lysine 269, tyrosine 271, and tyrosine 340.

The protein belongs to the tryptophan dimethylallyltransferase family.

It participates in alkaloid biosynthesis. In terms of biological role, prenyltransferase; part of the gene cluster that mediates the biosynthesis of paraherquamide, a fungal indole alkaloid that belongs to a family of natural products containing a characteristic bicyclo[2.2.2]diazaoctane core. The first steps in the biosynthesis of paraherquamide is the production of the beta-methyl-proline precursor from L-isoleucine. They require oxidation of a terminally hydroxylated L-isoleucine to the corresponding aldehyde by enzymes which have still to be identified. Spontaneous cyclization and dehydration would yield the 4-methyl pyrolline-5-carboxylic acid, which is then reduced by the pyrroline-5-carboxylate reductase phqD leading to the beta-methyl-proline precursor. The next step of paraherquamide biosynthesis involves coupling of beta-methyl-proline and L-tryptophan by the bimodular NRPS phqB, to produce a monooxopiperazine intermediate. The reductase (R) domain of phqB utilizes NADPH for hydride transfer to reduce the thioester bond of the T domain-tethered linear dipeptide to a hemithioaminal intermediate, which spontaneously cleaves the C-S bond to release the aldehyde product. This compound undergoes spontaneous cyclization and dehydration to give a dienamine which is reverse prenylated at C-2 by the reverse prenyltransferase phqJ. The other prenyltransferase present in the cluster, phqI may be a redundant gene in the pathway. During biosynthetic assembly, the key step to produce the polycyclic core is catalyzed by the bifunctional reductase and intramolecular [4+2] Diels-Alderase, phqE, resulting in formation of the [2.2.2] diazaoctane intermediate preparaherquamide. Following formation of preparaherquamide, an indole 2,3-epoxidation-initiated pinacol-like rearrangement is catalyzed by the phqK FAD-dependent monooxygenase. The prenyltransferase phqA, the cytochrome P450 monooxygenase phqL, and the FAD-linked oxidoreductase phqH (or the cytochrome P450 monooxygenase phqM), are proposed to be involved in the formation of the pyran ring. The FAD-dependent monooxygenase phqK is likely responsible for generation of the spiro-oxindole, and the N-methylation is likely mediated by the phqN methyltransferase leading to the isolable natural product paraherquamide F. However, the order of these biosynthetic steps has still to be determined. In late-stage paraherquamide biosynthesis, the third P450 monooxygenase, phqO, is probably responsible for the C-14 hydroxylation, transforming paraherquamide F to paraherquamide G, and paraherquamide E to the final product paraherquamide A. The expansion from the 6-membered ring pyran (in paraherquamides F and G) to the 7-membered dioxepin ring (in paraherquamides A and E) represents a poorly understood but intriguing process that probably involves the 2-oxoglutarate-dependent dioxygenase phqC. Finally, the remaining members of the paraherquamide cluster, including phqI as well as phqM (or phqH), do not have a clearly prescribed role and appear to be redundant. In Penicillium fellutanum, this protein is Prenyltransferase phqJ.